The chain runs to 756 residues: Xylosyl- and glucuronyltransferase LARGE1 (756 aa).

Over 1 to 10 (MLGICRGRRK) the chain is Cytoplasmic. The helical; Signal-anchor for type II membrane protein transmembrane segment at 11–31 (FLAASLTVLFVPAVTWIYLFA) threads the bilayer. The Lumenal portion of the chain corresponds to 32-756 (GSFEDGKPVS…LKYLTAENNS (725 aa)). Disordered regions lie at residues 42–63 (LSPLESQPHSPRYTASSQRDRE) and 81–109 (KQLSLAQGRSPSHHRGNHSKTYSMEEGTG). Polar residues predominate over residues 44 to 58 (PLESQPHSPRYTASS). A coiled-coil region spans residues 55 to 90 (TASSQRDRESLEVRMREVEEENRVLRKQLSLAQGRS). 3 N-linked (GlcNAc...) asparagine glycosylation sites follow: Asn-97, Asn-122, and Asn-148. Residues 138 to 413 (IHVAIVCAGY…FLEYDGNLLR (276 aa)) form a xylosyltransferase activity region. Residues Asp-242 and Asp-244 each coordinate Mn(2+). N-linked (GlcNAc...) asparagine glycosylation is present at Asn-272. Positions 414 to 756 (RELFGCPSEA…LKYLTAENNS (343 aa)) are glucuronyltransferase activity. Residues Asp-563 and Asp-565 each contribute to the Mn(2+) site.

It in the C-terminal section; belongs to the glycosyltransferase 49 family. The protein in the N-terminal section; belongs to the glycosyltransferase 8 family. It depends on Mn(2+) as a cofactor.

Its subcellular location is the golgi apparatus membrane. It carries out the reaction 3-O-[beta-D-GlcA-(1-&gt;3)-beta-D-Xyl-(1-&gt;4)-Rib-ol-P-Rib-ol-P-3-beta-D-GalNAc-(1-&gt;3)-beta-D-GlcNAc-(1-&gt;4)-(O-6-P-alpha-D-Man)]-Thr-[protein] + UDP-alpha-D-xylose = 3-O-[alpha-D-Xyl-(1-&gt;3)-beta-D-GlcA-(1-&gt;4)-beta-D-Xyl-(1-&gt;4)-Rib-ol-P-Rib-ol-P-3-beta-D-GalNAc-(1-&gt;3)-beta-D-GlcNAc-(1-&gt;4)-(O-6-P-alpha-D-Man)]-Thr-[protein] + UDP + H(+). The enzyme catalyses 3-O-{(1-&gt;[3)-alpha-D-Xyl-(1-&gt;3)-beta-D-GlcA-(1-&gt;](n)-4)-beta-D-Xyl-(1-&gt;4)-Rib-ol-P-Rib-ol-P-3-beta-D-GalNAc-(1-&gt;3)-beta-D-GlcNAc-(1-&gt;4)-O-6-P-alpha-D-Man}-L-Thr-[protein] + UDP-alpha-D-glucuronate = 3-O-{beta-D-GlcA-(1-&gt;[3)-alpha-D-Xyl-(1-&gt;3)-beta-D-GlcA-(1-&gt;](n)-4)-beta-D-Xyl-(1-&gt;4)-Rib-ol-P-Rib-ol-P-3-beta-D-GalNAc-(1-&gt;3)-beta-D-GlcNAc-(1-&gt;4)-O-6-P-alpha-D-Man}-L-Thr-[protein] + UDP + H(+). The catalysed reaction is 3-O-{beta-D-GlcA-(1-&gt;[3)-alpha-D-Xyl-(1-&gt;3)-beta-D-GlcA-(1-&gt;](n)-4)-beta-D-Xyl-(1-&gt;4)-Rib-ol-P-Rib-ol-P-3-beta-D-GalNAc-(1-&gt;3)-beta-D-GlcNAc-(1-&gt;4)-O-6-P-alpha-D-Man}-L-Thr-[protein] + UDP-alpha-D-xylose = 3-O-{(1-&gt;[3)-alpha-D-Xyl-(1-&gt;3)-beta-D-GlcA-(1-&gt;](n+1)-4)-beta-D-Xyl-(1-&gt;4)-Rib-ol-P-Rib-ol-P-3-beta-D-GalNAc-(1-&gt;3)-beta-D-GlcNAc-(1-&gt;4)-O-6-P-alpha-D-Man}-L-Thr-[protein] + UDP + H(+). The protein operates within protein modification; protein glycosylation. Functionally, bifunctional glycosyltransferase with both alpha-1,3-xylosyltransferase and beta-1,3-glucuronyltransferase activities involved in the maturation of alpha-dystroglycan (DAG1) by glycosylation leading to DAG1 binding to laminin G-like domain-containing extracellular proteins with high affinity. Elongates the glucuronyl-beta-1,4-xylose-beta disaccharide primer structure initiated by B4GAT1 by adding repeating units [-3-Xylose-alpha-1,3-GlcA-beta-1-] to produce a heteropolysaccharide. Requires the phosphorylation of core M3 (O-mannosyl trisaccharide) by POMK to elongate the glucuronyl-beta-1,4-xylose-beta disaccharide primer. Plays a key role in skeletal muscle function and regeneration. This chain is Xylosyl- and glucuronyltransferase LARGE1, found in Gallus gallus (Chicken).